We begin with the raw amino-acid sequence, 598 residues long: Elongation factor 4 (598 aa).

The tr-type G domain occupies 5 to 187 (ANIRNFSIIA…ALVEFIPAPT (183 aa)). Residues 17-22 (DHGKST) and 134-137 (NKID) each bind GTP.

Belongs to the TRAFAC class translation factor GTPase superfamily. Classic translation factor GTPase family. LepA subfamily.

It localises to the cell inner membrane. The enzyme catalyses GTP + H2O = GDP + phosphate + H(+). Required for accurate and efficient protein synthesis under certain stress conditions. May act as a fidelity factor of the translation reaction, by catalyzing a one-codon backward translocation of tRNAs on improperly translocated ribosomes. Back-translocation proceeds from a post-translocation (POST) complex to a pre-translocation (PRE) complex, thus giving elongation factor G a second chance to translocate the tRNAs correctly. Binds to ribosomes in a GTP-dependent manner. This Psychrobacter arcticus (strain DSM 17307 / VKM B-2377 / 273-4) protein is Elongation factor 4.